A 196-amino-acid polypeptide reads, in one-letter code: ATP-dependent Clp protease proteolytic subunit (196 aa).

Ser-98 functions as the Nucleophile in the catalytic mechanism. The active site involves His-123.

It belongs to the peptidase S14 family. In terms of assembly, fourteen ClpP subunits assemble into 2 heptameric rings which stack back to back to give a disk-like structure with a central cavity, resembling the structure of eukaryotic proteasomes.

The protein localises to the cytoplasm. It carries out the reaction Hydrolysis of proteins to small peptides in the presence of ATP and magnesium. alpha-casein is the usual test substrate. In the absence of ATP, only oligopeptides shorter than five residues are hydrolyzed (such as succinyl-Leu-Tyr-|-NHMec, and Leu-Tyr-Leu-|-Tyr-Trp, in which cleavage of the -Tyr-|-Leu- and -Tyr-|-Trp bonds also occurs).. In terms of biological role, cleaves peptides in various proteins in a process that requires ATP hydrolysis. Has a chymotrypsin-like activity. Plays a major role in the degradation of misfolded proteins. This Actinobacillus pleuropneumoniae serotype 7 (strain AP76) protein is ATP-dependent Clp protease proteolytic subunit.